A 218-amino-acid chain; its full sequence is Protein-L-isoaspartate O-methyltransferase (218 aa).

Residue serine 60 is part of the active site.

It belongs to the methyltransferase superfamily. L-isoaspartyl/D-aspartyl protein methyltransferase family.

The protein resides in the cytoplasm. The catalysed reaction is [protein]-L-isoaspartate + S-adenosyl-L-methionine = [protein]-L-isoaspartate alpha-methyl ester + S-adenosyl-L-homocysteine. Catalyzes the methyl esterification of L-isoaspartyl residues in peptides and proteins that result from spontaneous decomposition of normal L-aspartyl and L-asparaginyl residues. It plays a role in the repair and/or degradation of damaged proteins. This chain is Protein-L-isoaspartate O-methyltransferase, found in Roseiflexus sp. (strain RS-1).